Consider the following 295-residue polypeptide: ATP synthase gamma chain (295 aa).

Belongs to the ATPase gamma chain family. F-type ATPases have 2 components, CF(1) - the catalytic core - and CF(0) - the membrane proton channel. CF(1) has five subunits: alpha(3), beta(3), gamma(1), delta(1), epsilon(1). CF(0) has three main subunits: a, b and c.

The protein resides in the cell inner membrane. Its function is as follows. Produces ATP from ADP in the presence of a proton gradient across the membrane. The gamma chain is believed to be important in regulating ATPase activity and the flow of protons through the CF(0) complex. This Paraburkholderia phymatum (strain DSM 17167 / CIP 108236 / LMG 21445 / STM815) (Burkholderia phymatum) protein is ATP synthase gamma chain.